Reading from the N-terminus, the 381-residue chain is Creatine kinase B-type (381 aa).

Serine 4 carries the phosphoserine modification. The Phosphagen kinase N-terminal domain occupies 11–98 (KLRFPAEDEF…FDPIIEDRHG (88 aa)). Threonine 35 carries the phosphothreonine modification. Lysine 45 is covalently cross-linked (Glycyl lysine isopeptide (Lys-Gly) (interchain with G-Cter in ubiquitin)). A creatine-binding site is contributed by valine 72. Positions 96–110 (RHGGYKPSDEHKTDL) are enriched in basic and acidic residues. Positions 96–123 (RHGGYKPSDEHKTDLNPDNLQGGDDLDP) are disordered. Glycyl lysine isopeptide (Lys-Gly) (interchain with G-Cter in ubiquitin) cross-links involve residues lysine 101 and lysine 107. Tyrosine 125 is modified (phosphotyrosine). In terms of domain architecture, Phosphagen kinase C-terminal spans 125 to 367 (YVLSSRVRTG…KLLIEMEQRL (243 aa)). ATP is bound by residues 128–132 (SSRVR), arginine 130, arginine 132, and histidine 191. The interval 130–138 (RVRTGRSIR) is internal MTS-like signal. Serine 199 is modified (phosphoserine). Glutamate 232 is a creatine binding site. Arginine 236 provides a ligand contact to ATP. The residue at position 269 (tyrosine 269) is a 3'-nitrotyrosine. Serine 285 provides a ligand contact to creatine. ATP contacts are provided by residues arginine 292, arginine 320, 320-325 (RGTGGV), and aspartate 335. Threonine 322 is modified (phosphothreonine). Residue lysine 381 forms a Glycyl lysine isopeptide (Lys-Gly) (interchain with G-Cter in ubiquitin) linkage.

It belongs to the ATP:guanido phosphotransferase family. Dimer of identical or non-identical chains, which can be either B (brain type) or M (muscle type). With MM being the major form in skeletal muscle and myocardium, MB existing in myocardium, and BB existing in many tissues, especially brain. Interacts with SLC12A6 (via C-terminus); the interaction may be required for SLC12A6 potassium-chloride cotransport activity. Ubiquitinated by the ECS(ASB9) complex, leading to its degradation by the proteasome.

Its subcellular location is the cytoplasm. The protein localises to the cytosol. The protein resides in the mitochondrion. It is found in the cell membrane. The catalysed reaction is creatine + ATP = N-phosphocreatine + ADP + H(+). In terms of biological role, reversibly catalyzes the transfer of phosphate between ATP and various phosphogens (e.g. creatine phosphate). Creatine kinase isoenzymes play a central role in energy transduction in tissues with large, fluctuating energy demands, such as skeletal muscle, heart, brain and spermatozoa. Acts as a key regulator of adaptive thermogenesis as part of the futile creatine cycle: localizes to the mitochondria of thermogenic fat cells and acts by mediating phosphorylation of creatine to initiate a futile cycle of creatine phosphorylation and dephosphorylation. During the futile creatine cycle, creatine and N-phosphocreatine are in a futile cycle, which dissipates the high energy charge of N-phosphocreatine as heat without performing any mechanical or chemical work. The protein is Creatine kinase B-type (CKB) of Canis lupus familiaris (Dog).